We begin with the raw amino-acid sequence, 193 residues long: Potassium-transporting ATPase KdpC subunit (193 aa).

Residues 14–34 form a helical membrane-spanning segment; that stretch reads ITFTFLVLCGLVYPLIVTGIA.

This sequence belongs to the KdpC family. The system is composed of three essential subunits: KdpA, KdpB and KdpC.

It is found in the cell membrane. Functionally, part of the high-affinity ATP-driven potassium transport (or Kdp) system, which catalyzes the hydrolysis of ATP coupled with the electrogenic transport of potassium into the cytoplasm. This subunit acts as a catalytic chaperone that increases the ATP-binding affinity of the ATP-hydrolyzing subunit KdpB by the formation of a transient KdpB/KdpC/ATP ternary complex. The polypeptide is Potassium-transporting ATPase KdpC subunit (Bacillus thuringiensis subsp. konkukian (strain 97-27)).